The following is a 141-amino-acid chain: Large ribosomal subunit protein uL11 (141 aa).

The protein belongs to the universal ribosomal protein uL11 family. In terms of assembly, part of the ribosomal stalk of the 50S ribosomal subunit. Interacts with L10 and the large rRNA to form the base of the stalk. L10 forms an elongated spine to which L12 dimers bind in a sequential fashion forming a multimeric L10(L12)X complex. In terms of processing, one or more lysine residues are methylated.

Functionally, forms part of the ribosomal stalk which helps the ribosome interact with GTP-bound translation factors. The protein is Large ribosomal subunit protein uL11 of Synechococcus sp. (strain JA-3-3Ab) (Cyanobacteria bacterium Yellowstone A-Prime).